The primary structure comprises 160 residues: Ribosomal RNA large subunit methyltransferase H (160 aa).

Residues Gly108 and Phe127–Trp132 contribute to the S-adenosyl-L-methionine site.

It belongs to the RNA methyltransferase RlmH family. In terms of assembly, homodimer.

The protein localises to the cytoplasm. It catalyses the reaction pseudouridine(1915) in 23S rRNA + S-adenosyl-L-methionine = N(3)-methylpseudouridine(1915) in 23S rRNA + S-adenosyl-L-homocysteine + H(+). In terms of biological role, specifically methylates the pseudouridine at position 1915 (m3Psi1915) in 23S rRNA. This chain is Ribosomal RNA large subunit methyltransferase H, found in Bartonella bacilliformis (strain ATCC 35685 / KC583 / Herrer 020/F12,63).